The following is an 86-amino-acid chain: Small ribosomal subunit protein bS16 (86 aa).

Belongs to the bacterial ribosomal protein bS16 family.

This Hamiltonella defensa subsp. Acyrthosiphon pisum (strain 5AT) protein is Small ribosomal subunit protein bS16.